Reading from the N-terminus, the 269-residue chain is Diaminopimelate epimerase (269 aa).

Substrate-binding residues include asparagine 13, glutamine 46, and asparagine 65. Cysteine 74 serves as the catalytic Proton donor. Substrate contacts are provided by residues 75 to 76 (GN), asparagine 149, asparagine 182, and 200 to 201 (ER). Residue cysteine 209 is the Proton acceptor of the active site. 210–211 (GT) lines the substrate pocket.

It belongs to the diaminopimelate epimerase family. In terms of assembly, homodimer.

The protein localises to the cytoplasm. It catalyses the reaction (2S,6S)-2,6-diaminopimelate = meso-2,6-diaminopimelate. It functions in the pathway amino-acid biosynthesis; L-lysine biosynthesis via DAP pathway; DL-2,6-diaminopimelate from LL-2,6-diaminopimelate: step 1/1. Functionally, catalyzes the stereoinversion of LL-2,6-diaminopimelate (L,L-DAP) to meso-diaminopimelate (meso-DAP), a precursor of L-lysine and an essential component of the bacterial peptidoglycan. This chain is Diaminopimelate epimerase, found in Zymomonas mobilis subsp. mobilis (strain ATCC 31821 / ZM4 / CP4).